Here is a 369-residue protein sequence, read N- to C-terminus: Glutamate 5-kinase (369 aa).

ATP is bound at residue K9. S49, D136, and N148 together coordinate substrate. ATP-binding positions include 168-169 (TD) and 210-216 (TGGMLTK). Residues 275-355 (QGSIWVDKGA…KGVLIYRDDW (81 aa)) form the PUA domain.

It belongs to the glutamate 5-kinase family.

The protein localises to the cytoplasm. It catalyses the reaction L-glutamate + ATP = L-glutamyl 5-phosphate + ADP. It functions in the pathway amino-acid biosynthesis; L-proline biosynthesis; L-glutamate 5-semialdehyde from L-glutamate: step 1/2. Its function is as follows. Catalyzes the transfer of a phosphate group to glutamate to form L-glutamate 5-phosphate. In Streptococcus pneumoniae (strain 70585), this protein is Glutamate 5-kinase.